The following is a 257-amino-acid chain: Major prion protein (257 aa).

The N-terminal stretch at 1-24 (MVKSHIGGWILLLFVATWSDVGLC) is a signal peptide. An interaction with GRB2, ERI3 and SYN1 region spans residues 25 to 234 (KKRPKPGGWN…ESEAYYQRGA (210 aa)). Residues 28–110 (PKPGGWNTGG…GQWGKPNKPK (83 aa)) are disordered. 2 stretches are compositionally biased toward gly residues: residues 33 to 48 (WNTGGGSRYPGQGSPG) and 55 to 101 (QGGG…GSHG). 5 repeat units span residues 54–62 (PQGGGGWGQ), 63–70 (PHGGGWGQ), 71–78 (PHGGGWGQ), 79–86 (PHGGGWGQ), and 87–95 (PHGGGGWGQ). The tract at residues 54 to 95 (PQGGGGWGQPHGGGWGQPHGGGWGQPHGGGWGQPHGGGGWGQ) is 5 X 8 AA tandem repeats of P-H-G-G-G-W-G-Q. Residues H64, G65, G66, H72, G73, G74, H80, G81, G82, H88, G90, and G91 each contribute to the Cu(2+) site. C183 and C218 are joined by a disulfide. 2 N-linked (GlcNAc...) asparagine glycosylation sites follow: N185 and N201. A234 carries the GPI-anchor amidated alanine lipid modification. The propeptide at 235-257 (SAILFSPPPVILLISLLILLIVG) is removed in mature form.

This sequence belongs to the prion family. In terms of assembly, monomer and homodimer. Has a tendency to aggregate into amyloid fibrils containing a cross-beta spine, formed by a steric zipper of superposed beta-strands. Soluble oligomers may represent an intermediate stage on the path to fibril formation. Copper binding may promote oligomerization. Interacts with GRB2, APP, ERI3/PRNPIP and SYN1. Mislocalized cytosolically exposed PrP interacts with MGRN1; this interaction alters MGRN1 subcellular location and causes lysosomal enlargement. Interacts with KIAA1191.

Its subcellular location is the cell membrane. The protein localises to the golgi apparatus. In terms of biological role, its primary physiological function is unclear. Has cytoprotective activity against internal or environmental stresses. May play a role in neuronal development and synaptic plasticity. May be required for neuronal myelin sheath maintenance. May play a role in iron uptake and iron homeostasis. Soluble oligomers are toxic to cultured neuroblastoma cells and induce apoptosis (in vitro). Association with GPC1 (via its heparan sulfate chains) targets PRNP to lipid rafts. Also provides Cu(2+) or Zn(2+) for the ascorbate-mediated GPC1 deaminase degradation of its heparan sulfate side chains. This is Major prion protein from Vulpes lagopus (Arctic fox).